The sequence spans 786 residues: Endonuclease MutS2 (786 aa).

335-342 (GPNTGGKT) is an ATP binding site. A Smr domain is found at 711–786 (LDLRGERFEN…GLGVTVVELK (76 aa)).

It belongs to the DNA mismatch repair MutS family. MutS2 subfamily. In terms of assembly, homodimer. Binds to stalled ribosomes, contacting rRNA.

Its function is as follows. Endonuclease that is involved in the suppression of homologous recombination and thus may have a key role in the control of bacterial genetic diversity. Functionally, acts as a ribosome collision sensor, splitting the ribosome into its 2 subunits. Detects stalled/collided 70S ribosomes which it binds and splits by an ATP-hydrolysis driven conformational change. Acts upstream of the ribosome quality control system (RQC), a ribosome-associated complex that mediates the extraction of incompletely synthesized nascent chains from stalled ribosomes and their subsequent degradation. Probably generates substrates for RQC. The sequence is that of Endonuclease MutS2 from Bacillus cereus (strain ATCC 10987 / NRS 248).